Consider the following 163-residue polypeptide: MPDGDDDALTHTTADGDAQMVDVGSKPDTARRAVASGDLHLAESTIDAVRDDGIGKGNVLATARVGAIQAVKHTWETIPMCHQIPITNVDTTFDVRDDRVVLEVAVETTGKTGCEMEALEGVTTGLNVVWDMVKAAEKDADGQYPGTAIENVGVDTKEKHHPE.

The tract at residues 1 to 23 (MPDGDDDALTHTTADGDAQMVDV) is disordered. Residues 80 to 82 (MCH) and 116 to 117 (ME) contribute to the substrate site. The active site involves Asp131.

It belongs to the MoaC family. As to quaternary structure, homohexamer; trimer of dimers.

It carries out the reaction (8S)-3',8-cyclo-7,8-dihydroguanosine 5'-triphosphate = cyclic pyranopterin phosphate + diphosphate. It functions in the pathway cofactor biosynthesis; molybdopterin biosynthesis. Functionally, catalyzes the conversion of (8S)-3',8-cyclo-7,8-dihydroguanosine 5'-triphosphate to cyclic pyranopterin monophosphate (cPMP). In Halobacterium salinarum (strain ATCC 29341 / DSM 671 / R1), this protein is Probable cyclic pyranopterin monophosphate synthase.